A 151-amino-acid chain; its full sequence is Sec-independent protein translocase protein TatB (151 aa).

A helical membrane pass occupies residues 1-21 (MFDVSFTELMVIGVIALVVIG). The interval 66 to 151 (MDETARSMQT…DKTPPTGSAT (86 aa)) is disordered. The segment covering 93 to 103 (AELDDTARDAS) has biased composition (basic and acidic residues). Low complexity-rich tracts occupy residues 109-122 (ADAP…VASD) and 133-151 (APPA…GSAT).

Belongs to the TatB family. As to quaternary structure, the Tat system comprises two distinct complexes: a TatABC complex, containing multiple copies of TatA, TatB and TatC subunits, and a separate TatA complex, containing only TatA subunits. Substrates initially bind to the TatABC complex, which probably triggers association of the separate TatA complex to form the active translocon.

The protein resides in the cell inner membrane. Its function is as follows. Part of the twin-arginine translocation (Tat) system that transports large folded proteins containing a characteristic twin-arginine motif in their signal peptide across membranes. Together with TatC, TatB is part of a receptor directly interacting with Tat signal peptides. TatB may form an oligomeric binding site that transiently accommodates folded Tat precursor proteins before their translocation. This chain is Sec-independent protein translocase protein TatB, found in Bordetella parapertussis (strain 12822 / ATCC BAA-587 / NCTC 13253).